The chain runs to 110 residues: Phosphoribosyl-ATP pyrophosphatase (110 aa).

This sequence belongs to the PRA-PH family.

The protein resides in the cytoplasm. The catalysed reaction is 1-(5-phospho-beta-D-ribosyl)-ATP + H2O = 1-(5-phospho-beta-D-ribosyl)-5'-AMP + diphosphate + H(+). It functions in the pathway amino-acid biosynthesis; L-histidine biosynthesis; L-histidine from 5-phospho-alpha-D-ribose 1-diphosphate: step 2/9. The chain is Phosphoribosyl-ATP pyrophosphatase from Teredinibacter turnerae (strain ATCC 39867 / T7901).